A 293-amino-acid polypeptide reads, in one-letter code: Protease HtpX homolog (293 aa).

The next 2 membrane-spanning stretches (helical) occupy residues 4-24 (IFLF…TMRI) and 38-58 (LTGL…ISLL). His146 serves as a coordination point for Zn(2+). Glu147 is a catalytic residue. A Zn(2+)-binding site is contributed by His150. 2 helical membrane-spanning segments follow: residues 161–181 (LIQG…GYFV) and 198–218 (ATVI…VAWF). Glu223 contacts Zn(2+).

It belongs to the peptidase M48B family. The cofactor is Zn(2+).

The protein localises to the cell inner membrane. The chain is Protease HtpX homolog from Bordetella parapertussis (strain 12822 / ATCC BAA-587 / NCTC 13253).